Reading from the N-terminus, the 207-residue chain is Nucleoplasmin-2 (207 aa).

A compositionally biased stretch (polar residues) spans 1–15 (MSRHSTSSVTETTAK). 2 disordered regions span residues 1 to 20 (MSRHSTSSVTETTAKNMLWG) and 121 to 207 (DLTW…VTKK). Acidic residues predominate over residues 123-147 (TWEDDEEEEEEEEEEDEDEDADISL). Residues 129 to 152 (EEEEEEEEEDEDEDADISLEEIPV) form an acidic tract A2 region. A Bipartite nuclear localization signal motif is present at residues 165–180 (SIAKKKKVEKEEDETV). The span at 198 to 207 (PRAKKPVTKK) shows a compositional bias: basic residues.

Belongs to the nucleoplasmin family. Homopentamer, when bound to H2A-H2B dimers only. Homodecamer of two stacked pentamers, when bound to H2A-H2B dimers and H3-H4 tetramers simultaneously. Ovary specific.

It is found in the nucleus. Core histones chaperone involved in chromatin reprogramming, specially during fertilization and early embryonic development. Probably involved in sperm DNA decondensation during fertilization. This chain is Nucleoplasmin-2 (Npm2), found in Mus musculus (Mouse).